A 388-amino-acid polypeptide reads, in one-letter code: Sulfate adenylyltransferase (388 aa).

Belongs to the sulfate adenylyltransferase family.

The catalysed reaction is sulfate + ATP + H(+) = adenosine 5'-phosphosulfate + diphosphate. The protein operates within sulfur metabolism; hydrogen sulfide biosynthesis; sulfite from sulfate: step 1/3. This chain is Sulfate adenylyltransferase, found in Trichodesmium erythraeum (strain IMS101).